The following is a 153-amino-acid chain: Cytochrome c oxidase subunit 5A, mitochondrial (153 aa).

Residues 1–20 (MLRNTFTRAGGLSRITSVRF) constitute a mitochondrion transit peptide. Topologically, residues 21 to 88 (AQTHALSNAA…EWGPRRPVLN (68 aa)) are mitochondrial matrix. A helical membrane pass occupies residues 89 to 111 (KGDSSFIAKGVAAGLLFSVGLFA). Residues 112-153 (VVRMAGGQDAKTMNKEWQLKSDEYLKSKNANPWGGYSQVQSK) are Mitochondrial intermembrane-facing.

It belongs to the cytochrome c oxidase IV family. Component of the cytochrome c oxidase (complex IV, CIV), a multisubunit enzyme composed of 12 subunits. The complex is composed of a catalytic core of 3 subunits COX1, COX2 and COX3, encoded in the mitochondrial DNA, and 9 supernumerary subunits COX4, COX5A (or COX5B), COX6, COX7, COX8, COX9, COX12, COX13 and COX26, which are encoded in the nuclear genome. COX5A is the predominant subunit V during aerobic/normoxic growth, it gets replaced by COX5B under anaerobic/hypoxic conditions. The complex exists as a monomer or a dimer and forms supercomplexes (SCs) in the inner mitochondrial membrane with a dimer of ubiquinol-cytochrome c oxidoreductase (cytochrome b-c1 complex, complex III, CIII), resulting in 2 different assemblies (supercomplexes III(2)IV and III(2)IV(2)). COX5A interacts with COR1, CYT1 and QCR6 at the CIII-CIV interface.

Its subcellular location is the mitochondrion inner membrane. The protein operates within energy metabolism; oxidative phosphorylation. Its function is as follows. Component of the cytochrome c oxidase, the last enzyme in the mitochondrial electron transport chain which drives oxidative phosphorylation. The respiratory chain contains 3 multisubunit complexes succinate dehydrogenase (complex II, CII), ubiquinol-cytochrome c oxidoreductase (cytochrome b-c1 complex, complex III, CIII) and cytochrome c oxidase (complex IV, CIV), that cooperate to transfer electrons derived from NADH and succinate to molecular oxygen, creating an electrochemical gradient over the inner membrane that drives transmembrane transport and the ATP synthase. Cytochrome c oxidase is the component of the respiratory chain that catalyzes the reduction of oxygen to water. Electrons originating from reduced cytochrome c in the intermembrane space (IMS) are transferred via the dinuclear copper A center (CU(A)) of COX2 and heme A of COX1 to the active site in COX1, a binuclear center (BNC) formed by heme A3 and copper B (CU(B)). The BNC reduces molecular oxygen to 2 water molecules using 4 electrons from cytochrome c in the IMS and 4 protons from the mitochondrial matrix. This Saccharomyces cerevisiae (strain ATCC 204508 / S288c) (Baker's yeast) protein is Cytochrome c oxidase subunit 5A, mitochondrial (COX5A).